A 386-amino-acid chain; its full sequence is Succinate--CoA ligase [ADP-forming] subunit beta (386 aa).

The ATP-grasp domain maps to 9–244 (KDLLASYDVP…PSQENVRDVL (236 aa)). Residues K46, 53-55 (GRG), V102, and E107 contribute to the ATP site. Mg(2+) contacts are provided by N199 and D213. Substrate contacts are provided by residues N264 and 321-323 (GIM).

It belongs to the succinate/malate CoA ligase beta subunit family. As to quaternary structure, heterotetramer of two alpha and two beta subunits. Mg(2+) serves as cofactor.

The enzyme catalyses succinate + ATP + CoA = succinyl-CoA + ADP + phosphate. It carries out the reaction GTP + succinate + CoA = succinyl-CoA + GDP + phosphate. Its pathway is carbohydrate metabolism; tricarboxylic acid cycle; succinate from succinyl-CoA (ligase route): step 1/1. Functionally, succinyl-CoA synthetase functions in the citric acid cycle (TCA), coupling the hydrolysis of succinyl-CoA to the synthesis of either ATP or GTP and thus represents the only step of substrate-level phosphorylation in the TCA. The beta subunit provides nucleotide specificity of the enzyme and binds the substrate succinate, while the binding sites for coenzyme A and phosphate are found in the alpha subunit. This Chlamydia pneumoniae (Chlamydophila pneumoniae) protein is Succinate--CoA ligase [ADP-forming] subunit beta.